The chain runs to 729 residues: Phosphoribosylformylglycinamidine synthase subunit PurL (729 aa).

His-54 is a catalytic residue. The ATP site is built by Tyr-57 and Lys-96. Glu-98 serves as a coordination point for Mg(2+). Residues 99 to 102 (SHNH) and Arg-121 each bind substrate. The Proton acceptor role is filled by His-100. Asp-122 contacts Mg(2+). A substrate-binding site is contributed by Gln-245. Asp-273 contributes to the Mg(2+) binding site. 317 to 319 (ETQ) provides a ligand contact to substrate. ATP is bound by residues Asp-495 and Gly-532. Asn-533 contacts Mg(2+). Ser-535 contacts substrate.

The protein belongs to the FGAMS family. Monomer. Part of the FGAM synthase complex composed of 1 PurL, 1 PurQ and 2 PurS subunits.

The protein localises to the cytoplasm. It carries out the reaction N(2)-formyl-N(1)-(5-phospho-beta-D-ribosyl)glycinamide + L-glutamine + ATP + H2O = 2-formamido-N(1)-(5-O-phospho-beta-D-ribosyl)acetamidine + L-glutamate + ADP + phosphate + H(+). It participates in purine metabolism; IMP biosynthesis via de novo pathway; 5-amino-1-(5-phospho-D-ribosyl)imidazole from N(2)-formyl-N(1)-(5-phospho-D-ribosyl)glycinamide: step 1/2. Part of the phosphoribosylformylglycinamidine synthase complex involved in the purines biosynthetic pathway. Catalyzes the ATP-dependent conversion of formylglycinamide ribonucleotide (FGAR) and glutamine to yield formylglycinamidine ribonucleotide (FGAM) and glutamate. The FGAM synthase complex is composed of three subunits. PurQ produces an ammonia molecule by converting glutamine to glutamate. PurL transfers the ammonia molecule to FGAR to form FGAM in an ATP-dependent manner. PurS interacts with PurQ and PurL and is thought to assist in the transfer of the ammonia molecule from PurQ to PurL. In Staphylococcus aureus (strain USA300), this protein is Phosphoribosylformylglycinamidine synthase subunit PurL.